The chain runs to 385 residues: GPN-loop GTPase 1 (385 aa).

Residue 13–18 (GSGKTT) coordinates GTP. A Gly-Pro-Asn (GPN)-loop; involved in dimer interface motif is present at residues 70-72 (GPN). GTP is bound at residue 173-176 (NKTD). 3 positions are modified to phosphoserine: serine 304, serine 308, and serine 313. Residues 317–332 (EDANDGLVDRDEDEGV) are compositionally biased toward acidic residues. The segment at 317–356 (EDANDGLVDRDEDEGVEREYTFPGEERTKGEVNENSAPDL) is disordered. Basic and acidic residues predominate over residues 333–348 (EREYTFPGEERTKGEV). Serine 352 carries the post-translational modification Phosphoserine. A Glycyl lysine isopeptide (Lys-Gly) (interchain with G-Cter in ubiquitin) cross-link involves residue lysine 369.

It belongs to the GPN-loop GTPase family. As to quaternary structure, heterodimers with GPN2 or GPN3. Binds to RNA polymerase II (RNAPII) in a GTP-dependent manner. Interacts with nuclear pore protein NUP133 and nuclear export factor CRM1. Interacts with PCL1. In terms of processing, phosphorylated by the cyclin-CDK PCL1-PHO85.

Its subcellular location is the cytoplasm. In terms of biological role, small GTPase required for proper nuclear import of RNA polymerase II (RNAPII). May act at an RNAP assembly step prior to nuclear import. Promotes sister chromatid separation during anaphase. In Saccharomyces cerevisiae (strain ATCC 204508 / S288c) (Baker's yeast), this protein is GPN-loop GTPase 1.